We begin with the raw amino-acid sequence, 251 residues long: 1-(5-phosphoribosyl)-5-[(5-phosphoribosylamino)methylideneamino] imidazole-4-carboxamide isomerase (251 aa).

Aspartate 8 (proton acceptor) is an active-site residue. The active-site Proton donor is aspartate 131.

Belongs to the HisA/HisF family.

The protein localises to the cytoplasm. The catalysed reaction is 1-(5-phospho-beta-D-ribosyl)-5-[(5-phospho-beta-D-ribosylamino)methylideneamino]imidazole-4-carboxamide = 5-[(5-phospho-1-deoxy-D-ribulos-1-ylimino)methylamino]-1-(5-phospho-beta-D-ribosyl)imidazole-4-carboxamide. The protein operates within amino-acid biosynthesis; L-histidine biosynthesis; L-histidine from 5-phospho-alpha-D-ribose 1-diphosphate: step 4/9. The polypeptide is 1-(5-phosphoribosyl)-5-[(5-phosphoribosylamino)methylideneamino] imidazole-4-carboxamide isomerase (Thiobacillus denitrificans (strain ATCC 25259 / T1)).